The following is a 169-amino-acid chain: Ribonuclease H (169 aa).

The 157-residue stretch at 3 to 159 (AHAALTLYTD…CDRLATDAAR (157 aa)) folds into the RNase H type-1 domain. D12, E63, D87, and D151 together coordinate Mg(2+).

The protein belongs to the RNase H family. As to quaternary structure, monomer. Mg(2+) serves as cofactor.

The protein resides in the cytoplasm. It carries out the reaction Endonucleolytic cleavage to 5'-phosphomonoester.. Its function is as follows. Endonuclease that specifically degrades the RNA of RNA-DNA hybrids. The sequence is that of Ribonuclease H from Treponema pallidum subsp. pallidum (strain SS14).